The following is a 41-amino-acid chain: Photosystem I reaction center subunit IX (41 aa).

The chain crosses the membrane as a helical span at residues 7–29 (YLSTAPVLLTVWLSITASGIMII).

Belongs to the PsaJ family.

Its subcellular location is the plastid. The protein localises to the chloroplast thylakoid membrane. Functionally, may help in the organization of the PsaE and PsaF subunits. The sequence is that of Photosystem I reaction center subunit IX from Heterosigma akashiwo (strain NIES-293 / 8280G21-1).